Reading from the N-terminus, the 454-residue chain is NADP-specific glutamate dehydrogenase (454 aa).

Ser2 bears the N-acetylserine mark. Lys114 is a catalytic residue.

The protein belongs to the Glu/Leu/Phe/Val dehydrogenases family. In terms of assembly, homohexamer.

It carries out the reaction L-glutamate + NADP(+) + H2O = 2-oxoglutarate + NH4(+) + NADPH + H(+). The sequence is that of NADP-specific glutamate dehydrogenase (gdh) from Neurospora crassa (strain ATCC 24698 / 74-OR23-1A / CBS 708.71 / DSM 1257 / FGSC 987).